Consider the following 339-residue polypeptide: Phosphate acyltransferase (339 aa).

This sequence belongs to the PlsX family. In terms of assembly, homodimer. Probably interacts with PlsY.

It is found in the cytoplasm. The enzyme catalyses a fatty acyl-[ACP] + phosphate = an acyl phosphate + holo-[ACP]. The protein operates within lipid metabolism; phospholipid metabolism. Functionally, catalyzes the reversible formation of acyl-phosphate (acyl-PO(4)) from acyl-[acyl-carrier-protein] (acyl-ACP). This enzyme utilizes acyl-ACP as fatty acyl donor, but not acyl-CoA. The sequence is that of Phosphate acyltransferase from Tolumonas auensis (strain DSM 9187 / NBRC 110442 / TA 4).